We begin with the raw amino-acid sequence, 315 residues long: Glycine--tRNA ligase alpha subunit (315 aa).

Belongs to the class-II aminoacyl-tRNA synthetase family. As to quaternary structure, tetramer of two alpha and two beta subunits.

It localises to the cytoplasm. The enzyme catalyses tRNA(Gly) + glycine + ATP = glycyl-tRNA(Gly) + AMP + diphosphate. The protein is Glycine--tRNA ligase alpha subunit of Pseudomonas syringae pv. tomato (strain ATCC BAA-871 / DC3000).